Consider the following 70-residue polypeptide: uncharacterized protein (70 aa).

This is an uncharacterized protein from Bacillus phage phi105 (Bacteriophage phi-105).